The primary structure comprises 414 residues: 3-phosphoshikimate 1-carboxyvinyltransferase (414 aa).

3-phosphoshikimate is bound by residues Lys-20, Ser-21, and Arg-25. Position 20 (Lys-20) interacts with phosphoenolpyruvate. Positions 85 and 113 each coordinate phosphoenolpyruvate. 3-phosphoshikimate is bound by residues Ser-154, Ser-155, Gln-156, Ser-181, Asp-296, and Lys-323. Gln-156 contributes to the phosphoenolpyruvate binding site. Catalysis depends on Asp-296, which acts as the Proton acceptor. Residues Arg-327, Arg-371, and Lys-395 each coordinate phosphoenolpyruvate.

This sequence belongs to the EPSP synthase family. In terms of assembly, monomer.

It localises to the cytoplasm. The catalysed reaction is 3-phosphoshikimate + phosphoenolpyruvate = 5-O-(1-carboxyvinyl)-3-phosphoshikimate + phosphate. The protein operates within metabolic intermediate biosynthesis; chorismate biosynthesis. Its function is as follows. Catalyzes the transfer of the enolpyruvyl moiety of phosphoenolpyruvate (PEP) to the 5-hydroxyl of shikimate-3-phosphate (S3P) to produce enolpyruvyl shikimate-3-phosphate and inorganic phosphate. This is 3-phosphoshikimate 1-carboxyvinyltransferase from Saccharolobus islandicus (strain M.14.25 / Kamchatka #1) (Sulfolobus islandicus).